Consider the following 478-residue polypeptide: Deoxyribodipyrimidine photo-lyase (478 aa).

In terms of domain architecture, Photolyase/cryptochrome alpha/beta spans N2–L136. E110 is a (6R)-5,10-methylene-5,6,7,8-tetrahydrofolate binding site. Residues Y227 and T239–S243 contribute to the FAD site. 2 interaction with DNA regions span residues E279–Y286 and N346–R347. D377–D379 serves as a coordination point for FAD. Q409 lines the DNA pocket.

This sequence belongs to the DNA photolyase class-1 family. In terms of assembly, monomer. The cofactor is FAD. It depends on (6R)-5,10-methylene-5,6,7,8-tetrahydrofolate as a cofactor.

The enzyme catalyses cyclobutadipyrimidine (in DNA) = 2 pyrimidine residues (in DNA).. Functionally, involved in repair of UV radiation-induced DNA damage. Catalyzes the light-dependent monomerization (300-600 nm) of cyclobutyl pyrimidine dimers (in cis-syn configuration), which are formed between adjacent bases on the same DNA strand upon exposure to ultraviolet radiation. This is Deoxyribodipyrimidine photo-lyase (phrB) from Buchnera aphidicola subsp. Baizongia pistaciae (strain Bp).